Consider the following 191-residue polypeptide: Small ribosomal subunit protein uS5 (191 aa).

Residues 1-20 are disordered; that stretch reads MAAERERGGRERSRDREERD. The S5 DRBM domain maps to 23–86; the sequence is FVDKLVHINR…EAAKRNLTRV (64 aa).

This sequence belongs to the universal ribosomal protein uS5 family. Part of the 30S ribosomal subunit. Contacts proteins S4 and S8.

With S4 and S12 plays an important role in translational accuracy. Its function is as follows. Located at the back of the 30S subunit body where it stabilizes the conformation of the head with respect to the body. This chain is Small ribosomal subunit protein uS5, found in Rhodopseudomonas palustris (strain HaA2).